We begin with the raw amino-acid sequence, 210 residues long: Probable GTP-binding protein EngB (210 aa).

The EngB-type G domain maps to 25-199; it reads TGIEVAFAGR…RQKLDTWFSE (175 aa). Residues 33–40, 60–64, 78–81, 145–148, and 178–180 each bind GTP; these read GRSNAGKS, GRTQL, DLPG, TKAD, and FSS. Positions 40 and 62 each coordinate Mg(2+).

It belongs to the TRAFAC class TrmE-Era-EngA-EngB-Septin-like GTPase superfamily. EngB GTPase family. Mg(2+) is required as a cofactor.

Its function is as follows. Necessary for normal cell division and for the maintenance of normal septation. This Escherichia coli O6:H1 (strain CFT073 / ATCC 700928 / UPEC) protein is Probable GTP-binding protein EngB.